We begin with the raw amino-acid sequence, 1032 residues long: MQRLKIKRCILSQKEPKVAYDCSMAKKRRAEEQALGVPVNKRKSLLMKPRHYSPDMDCKENPDNRNEDDGLETNDHSTADEIVVKPMDKTLHLPAQESSLPKEDQYACYPELMVKSLMHLGKFEESESVQTVGENLNGNGIQSLKAECDEANECFMVHSDDGRDKVHHSQPPFCSSGDSESDSDNTENGWGSGSNSSEDTDTHKGPKRKLTYNRKDLLEVPEIKAEDDKFIPCENRCDSDTSGRDPQNSHMEPLAVKVQPSFPEVEESESLATVIAESAEVEKAKGSLSLLEQAIALQAERGSVFHHTYKELDRFLLDHLARQRRQPKVTDASGRQIFNNKHSPRPERREAKCPIPGCDGTGHVTGLYPHHRSLSGCPHKVRVPLEILAMHENVLKCPTPGCTGRGHVNSNRNTHRSLSGCPIAAAEKLAMTQDKSQLDSSQTGQGPEQAHRVNLVKQIEFNFRSQAITSPRASASKEQEKFGKVPFDYASFDAQVFGKRPLLQTGQGQKAPPFPESKHFSNPVKFSNGLPSAGAHTQSTVRASSYGHGQYSEDTHIAAAAAILNLSTRCREATDILSNKPQSLRAKGAEIEVDENGTLDLSMKKNRILDKSIPPTSSHTTIATPSSSPFKASSLLVNAAFYQALCDQEGWNVPINYSKSHGKTEEEKEKDPVNSLENLEEKKFAGEASIPSPKPKLHTRDLKKELITCPTPGCDGSGHVTGNYASHRSVSGCPLADKTLKSLMAANSQELKCPTPGCDGSGHVTGNYASHRSLSGCPRARKGGIKMTPTKEEKEDSELRCPVIGCDGQGHISGKYTSHRTASGCPLAAKRQKENPLNGTPLSWKLNKQELPHCPLPGCNGLGHVNNVFVTHRSLSGCPLNAQAIKKVKVSEELMTIKLKATGGIEGDEEIRHLDEEIKELNESNLKIEADMMKLQTQITSMESNLKTIEEENKLIEQSNESLLKELAGLSQALISSLADIQLPQMGPINEQNFEAYVNTLTDMYSNLERDYSPECKALLESIKQAVKGIHV.

Disordered stretches follow at residues 29–76 (RAEE…TNDH), 162–213 (GRDK…LTYN), and 325–354 (RQPK…AKCP). The span at 40–51 (NKRKSLLMKPRH) shows a compositional bias: basic residues. Over residues 52 to 76 (YSPDMDCKENPDNRNEDDGLETNDH) the composition is skewed to basic and acidic residues. 6 consecutive CCHHC-type zinc fingers follow at residues 344-387 (PRPE…PLEI), 388-431 (LAMH…KLAM), 700-743 (RDLK…LKSL), 744-787 (MAAN…GIKM), 792-835 (EEKE…QKEN), and 845-888 (KLNK…IKKV). Zn(2+) contacts are provided by Cys353, Cys358, His371, Cys377, Cys397, Cys402, His415, Cys421, Cys709, Cys714, His727, Cys733, Cys753, Cys758, His771, Cys777, Cys801, Cys806, His819, Cys825, Cys854, Cys859, His872, and Cys878. A coiled-coil region spans residues 905-974 (IEGDEEIRHL…KELAGLSQAL (70 aa)).

The protein belongs to the MYT1 family. In terms of tissue distribution, detected in brain.

The protein resides in the nucleus. Repressor that binds to DNA sequences containing a bipartite element consisting of a direct repeat of the sequence 5'-AAAGTTT-3' separated by 2-9 nucleotides. Represses basal transcription activity from target promoters. This Rattus norvegicus (Rat) protein is Suppression of tumorigenicity 18 protein (St18).